A 168-amino-acid polypeptide reads, in one-letter code: Peptide deformylase (168 aa).

Fe cation is bound by residues cysteine 92 and histidine 134. Glutamate 135 is a catalytic residue. Position 138 (histidine 138) interacts with Fe cation.

It belongs to the polypeptide deformylase family. Requires Fe(2+) as cofactor.

It catalyses the reaction N-terminal N-formyl-L-methionyl-[peptide] + H2O = N-terminal L-methionyl-[peptide] + formate. Removes the formyl group from the N-terminal Met of newly synthesized proteins. Requires at least a dipeptide for an efficient rate of reaction. N-terminal L-methionine is a prerequisite for activity but the enzyme has broad specificity at other positions. The protein is Peptide deformylase of Pseudomonas aeruginosa (strain ATCC 15692 / DSM 22644 / CIP 104116 / JCM 14847 / LMG 12228 / 1C / PRS 101 / PAO1).